The chain runs to 310 residues: Nucleotide-binding protein MAP_1147 (310 aa).

30 to 37 (GLSGAGRG) serves as a coordination point for ATP. 81–84 (DVRS) is a GTP binding site.

This sequence belongs to the RapZ-like family.

Displays ATPase and GTPase activities. In Mycolicibacterium paratuberculosis (strain ATCC BAA-968 / K-10) (Mycobacterium paratuberculosis), this protein is Nucleotide-binding protein MAP_1147.